A 473-amino-acid chain; its full sequence is Cysteine--tRNA ligase (473 aa).

A Zn(2+)-binding site is contributed by Cys-28. A 'HIGH' region motif is present at residues 30–40 (VTVYDLCHLGH). Cys-213, His-238, and Glu-242 together coordinate Zn(2+). Positions 270–274 (KMSKS) match the 'KMSKS' region motif. Lys-273 lines the ATP pocket.

This sequence belongs to the class-I aminoacyl-tRNA synthetase family. Monomer. Zn(2+) serves as cofactor.

It is found in the cytoplasm. The catalysed reaction is tRNA(Cys) + L-cysteine + ATP = L-cysteinyl-tRNA(Cys) + AMP + diphosphate. The sequence is that of Cysteine--tRNA ligase from Blochmanniella pennsylvanica (strain BPEN).